The chain runs to 407 residues: Multifunctional CCA protein (407 aa).

ATP is bound by residues Gly-8 and Arg-11. Gly-8 and Arg-11 together coordinate CTP. Asp-21 and Asp-23 together coordinate Mg(2+). ATP contacts are provided by Arg-91, Arg-137, and Arg-140. CTP contacts are provided by Arg-91, Arg-137, and Arg-140. Positions 228–329 constitute an HD domain; sequence TGIHTLLVAE…VKIFNKLDVW (102 aa).

This sequence belongs to the tRNA nucleotidyltransferase/poly(A) polymerase family. Bacterial CCA-adding enzyme type 1 subfamily. In terms of assembly, monomer. Can also form homodimers and oligomers. Mg(2+) is required as a cofactor. The cofactor is Ni(2+).

The catalysed reaction is a tRNA precursor + 2 CTP + ATP = a tRNA with a 3' CCA end + 3 diphosphate. The enzyme catalyses a tRNA with a 3' CCA end + 2 CTP + ATP = a tRNA with a 3' CCACCA end + 3 diphosphate. Its function is as follows. Catalyzes the addition and repair of the essential 3'-terminal CCA sequence in tRNAs without using a nucleic acid template. Adds these three nucleotides in the order of C, C, and A to the tRNA nucleotide-73, using CTP and ATP as substrates and producing inorganic pyrophosphate. tRNA 3'-terminal CCA addition is required both for tRNA processing and repair. Also involved in tRNA surveillance by mediating tandem CCA addition to generate a CCACCA at the 3' terminus of unstable tRNAs. While stable tRNAs receive only 3'-terminal CCA, unstable tRNAs are marked with CCACCA and rapidly degraded. This chain is Multifunctional CCA protein, found in Vibrio vulnificus (strain YJ016).